The following is a 255-amino-acid chain: F-box/SPRY domain-containing protein 1 (255 aa).

The F-box domain maps to 3 to 51 (DPVAALCNYNVLEVIFSYLELDDLSHCSQVCKSWNLFLNDENSDVWRWH). Residues 61 to 253 (LKSDLLSSVS…VSMVYLGTPM (193 aa)) enclose the B30.2/SPRY domain.

Belongs to the FBXO45/Fsn family. Component of an E3 ubiquitin ligase complex composed of hiw and Fsn.

The protein resides in the synapse. The protein operates within protein modification; protein ubiquitination. Functionally, required in the presynaptic motoneuron to down-regulate the levels of wnd and restrain synaptic terminal growth at the neuromuscular junction (NMJ). This chain is F-box/SPRY domain-containing protein 1, found in Drosophila ananassae (Fruit fly).